We begin with the raw amino-acid sequence, 459 residues long: Bifunctional protein GlmU (459 aa).

Positions 1-229 (MSNFAIILAA…FDESLGVNDR (229 aa)) are pyrophosphorylase. Residues 8 to 11 (LAAG), Lys22, Gln72, and 77 to 78 (GT) contribute to the UDP-N-acetyl-alpha-D-glucosamine site. Residue Asp102 participates in Mg(2+) binding. Positions 139, 154, 169, and 227 each coordinate UDP-N-acetyl-alpha-D-glucosamine. A Mg(2+)-binding site is contributed by Asn227. The segment at 230-250 (VALATAESVMRRRINHKHMVN) is linker. The N-acetyltransferase stretch occupies residues 251-459 (GVSFVNPEAT…TRLPHHPKNQ (209 aa)). UDP-N-acetyl-alpha-D-glucosamine contacts are provided by Arg332 and Lys350. The active-site Proton acceptor is His362. Residues Tyr365 and Asn376 each contribute to the UDP-N-acetyl-alpha-D-glucosamine site. Acetyl-CoA-binding positions include Ala379, 385-386 (NY), Ser404, Ala422, and Arg439.

This sequence in the N-terminal section; belongs to the N-acetylglucosamine-1-phosphate uridyltransferase family. It in the C-terminal section; belongs to the transferase hexapeptide repeat family. In terms of assembly, homotrimer. Requires Mg(2+) as cofactor.

The protein localises to the cytoplasm. The catalysed reaction is alpha-D-glucosamine 1-phosphate + acetyl-CoA = N-acetyl-alpha-D-glucosamine 1-phosphate + CoA + H(+). The enzyme catalyses N-acetyl-alpha-D-glucosamine 1-phosphate + UTP + H(+) = UDP-N-acetyl-alpha-D-glucosamine + diphosphate. Its pathway is nucleotide-sugar biosynthesis; UDP-N-acetyl-alpha-D-glucosamine biosynthesis; N-acetyl-alpha-D-glucosamine 1-phosphate from alpha-D-glucosamine 6-phosphate (route II): step 2/2. The protein operates within nucleotide-sugar biosynthesis; UDP-N-acetyl-alpha-D-glucosamine biosynthesis; UDP-N-acetyl-alpha-D-glucosamine from N-acetyl-alpha-D-glucosamine 1-phosphate: step 1/1. It functions in the pathway bacterial outer membrane biogenesis; LPS lipid A biosynthesis. Catalyzes the last two sequential reactions in the de novo biosynthetic pathway for UDP-N-acetylglucosamine (UDP-GlcNAc). The C-terminal domain catalyzes the transfer of acetyl group from acetyl coenzyme A to glucosamine-1-phosphate (GlcN-1-P) to produce N-acetylglucosamine-1-phosphate (GlcNAc-1-P), which is converted into UDP-GlcNAc by the transfer of uridine 5-monophosphate (from uridine 5-triphosphate), a reaction catalyzed by the N-terminal domain. The chain is Bifunctional protein GlmU from Streptococcus pneumoniae (strain 70585).